Consider the following 585-residue polypeptide: Complement component C8 alpha chain (585 aa).

The N-terminal stretch at 1–20 is a signal peptide; that stretch reads MLVAAFFTLFLVTCQPAVTA. Positions 21–30 are excised as a propeptide; that stretch reads QEKVNQRVNR. A TSP type-1 1 domain is found at 38–91; it reads DCQLSSWSEWTDCFPCQDTKYRHRSLLQPNKFGGTICSGDIWDRASCYSPTACL. 7 disulfides stabilise this stretch: C39/C74, C50/C84, C53/C90, C96/C108, C102/C121, C115/C130, and C140/C177. A glycan (C-linked (Man) tryptophan) is linked at W44. The LDL-receptor class A domain occupies 94–132; sequence AQCGQDFQCKETGRCLKRHLVCNGENDCLDGSDEDNCED. L113, N116, E118, D120, D126, and E127 together coordinate Ca(2+). The MACPF domain maps to 136 to 499; the sequence is TESDCAQYDP…QYLMEFNACR (364 aa). 4 beta stranded membrane-spanning segments follow: residues 248 to 256, 259 to 266, 377 to 384, and 391 to 396; these read AGVTISAGL, SPLLGTVG, GGFGEIQY, and AQGILS. C375 and C400 are joined by a disulfide. N438 carries an N-linked (GlcNAc...) asparagine glycan. 4 cysteine pairs are disulfide-bonded: C498/C545, C500/C516, C503/C518, and C520/C529. In terms of domain architecture, EGF-like spans 499 to 530; that stretch reads RCGPCFNNGKPILEGTSCRCQCSLGLQGPACE. The TSP type-1 2 domain maps to 540–584; the sequence is DGHWSCWGSWSPCTAGTRERRRECNNPAPQNGGAPCPGWRVQTQA. C-linked (Man) tryptophan glycans are attached at residues W543, W546, and W549. Intrachain disulfides connect C552/C585 and C563/C575.

The protein belongs to the complement C6/C7/C8/C9 family. In terms of assembly, heterotrimer of 3 chains: alpha (C8A), beta (C8B) and gamma (C8G); the alpha and gamma chains are disulfide bonded. Component of the membrane attack complex (MAC), composed of complement C5b, C6, C7, C8A, C8B, C8G and multiple copies of the pore-forming subunit C9.

It localises to the secreted. Its subcellular location is the target cell membrane. Membrane attack complex (MAC) assembly is inhibited by CD59, thereby protecting self-cells from damage during complement activation. CD59 acts by binding to the beta-haipins of C8 (C8A and C8B), forming an intermolecular beta-sheet that prevents incorporation of the multiple copies of C9 required for complete formation of the osmolytic pore. MAC assembly is also inhibited by clusterin (CLU) chaperones that inhibit polymerization of C9. Functionally, component of the membrane attack complex (MAC), a multiprotein complex activated by the complement cascade, which inserts into a target cell membrane and forms a pore, leading to target cell membrane rupture and cell lysis. The MAC is initiated by proteolytic cleavage of C5 into complement C5b in response to the classical, alternative, lectin and GZMK complement pathways. The complement pathways consist in a cascade of proteins that leads to phagocytosis and breakdown of pathogens and signaling that strengthens the adaptive immune system. C8A, together with C8B and C8G, inserts into the target membrane, but does not form pores by itself. During MAC assembly, associates with C5b, C6 and C7 to form the C5b8 intermediate complex that inserts into the target membrane and traverses the bilayer increasing membrane rigidity. The protein is Complement component C8 alpha chain (C8A) of Oryctolagus cuniculus (Rabbit).